The chain runs to 150 residues: Endoribonuclease YbeY (150 aa).

Residues histidine 112, histidine 116, and histidine 122 each coordinate Zn(2+).

Belongs to the endoribonuclease YbeY family. It depends on Zn(2+) as a cofactor.

It is found in the cytoplasm. Functionally, single strand-specific metallo-endoribonuclease involved in late-stage 70S ribosome quality control and in maturation of the 3' terminus of the 16S rRNA. The chain is Endoribonuclease YbeY from Geobacter sulfurreducens (strain ATCC 51573 / DSM 12127 / PCA).